Consider the following 848-residue polypeptide: DNA mismatch repair protein MutS (848 aa).

Residue 605-612 coordinates ATP; the sequence is GPNMAGKS.

This sequence belongs to the DNA mismatch repair MutS family.

In terms of biological role, this protein is involved in the repair of mismatches in DNA. It is possible that it carries out the mismatch recognition step. This protein has a weak ATPase activity. The chain is DNA mismatch repair protein MutS from Leptospira borgpetersenii serovar Hardjo-bovis (strain JB197).